The sequence spans 483 residues: Galactose-3-O-sulfotransferase 4 (483 aa).

The Cytoplasmic segment spans residues 1 to 18; the sequence is MGVLSPTRTMRLWGPRSL. The helical; Signal-anchor for type II membrane protein transmembrane segment at 19–39 threads the bilayer; that stretch reads GVALGVFMTIGFALQLLGGPF. Topologically, residues 40–483 are lumenal; the sequence is QRRLPGLQLR…PLKTSRRPSP (444 aa). The segment at 225–248 is disordered; that stretch reads KRGNPHVSRDPNPPQLPSGAGPPA. N-linked (GlcNAc...) asparagine glycosylation occurs at asparagine 371.

The protein belongs to the galactose-3-O-sulfotransferase family. Mn(2+) is required as a cofactor.

It localises to the golgi apparatus. The protein resides in the golgi stack membrane. It functions in the pathway protein modification; carbohydrate sulfation. Its function is as follows. Catalyzes the transfer of sulfate to beta-1,3-linked galactose residues in O-linked glycoproteins. Good substrates include asialofetuin, Gal-beta-1,3-GalNAc and Gal-beta-1,3 (GlcNAc-beta-1,6)GalNAc. In Bos taurus (Bovine), this protein is Galactose-3-O-sulfotransferase 4 (GAL3ST4).